Consider the following 728-residue polypeptide: UvrABC system protein C (728 aa).

Residues 16–95 enclose the GIY-YIG domain; sequence DSPGVYRFRD…IKEYDPRFNV (80 aa). The region spanning 208–243 is the UVR domain; that stretch reads GTYLRRLERQMAEAAEEMEYERAARLRDDIGALKKA. 2 disordered regions span residues 473–535 and 689–728; these read ADGE…GRPK and VNTA…GQER. Over residues 487–505 the composition is skewed to low complexity; it reads GDAAPNGDAAPNDGAAPDD.

Belongs to the UvrC family. In terms of assembly, interacts with UvrB in an incision complex.

The protein localises to the cytoplasm. In terms of biological role, the UvrABC repair system catalyzes the recognition and processing of DNA lesions. UvrC both incises the 5' and 3' sides of the lesion. The N-terminal half is responsible for the 3' incision and the C-terminal half is responsible for the 5' incision. The protein is UvrABC system protein C of Streptomyces coelicolor (strain ATCC BAA-471 / A3(2) / M145).